Consider the following 405-residue polypeptide: Acetate kinase (405 aa).

Mg(2+) is bound at residue Asn7. Lys14 serves as a coordination point for ATP. A substrate-binding site is contributed by Arg98. Asp155 (proton donor/acceptor) is an active-site residue. ATP contacts are provided by residues 215–219, 289–291, and 337–341; these read HLGNG, DMR, and GIGEN. Glu391 serves as a coordination point for Mg(2+).

It belongs to the acetokinase family. As to quaternary structure, homodimer. The cofactor is Mg(2+). It depends on Mn(2+) as a cofactor.

The protein resides in the cytoplasm. It catalyses the reaction acetate + ATP = acetyl phosphate + ADP. It participates in metabolic intermediate biosynthesis; acetyl-CoA biosynthesis; acetyl-CoA from acetate: step 1/2. In terms of biological role, catalyzes the formation of acetyl phosphate from acetate and ATP. Can also catalyze the reverse reaction. In Desulfotalea psychrophila (strain LSv54 / DSM 12343), this protein is Acetate kinase.